A 190-amino-acid chain; its full sequence is Threonylcarbamoyl-AMP synthase (190 aa).

In terms of domain architecture, YrdC-like spans Gly-7–Gly-190.

It belongs to the SUA5 family. TsaC subfamily.

The protein localises to the cytoplasm. It catalyses the reaction L-threonine + hydrogencarbonate + ATP = L-threonylcarbamoyladenylate + diphosphate + H2O. Functionally, required for the formation of a threonylcarbamoyl group on adenosine at position 37 (t(6)A37) in tRNAs that read codons beginning with adenine. Catalyzes the conversion of L-threonine, HCO(3)(-)/CO(2) and ATP to give threonylcarbamoyl-AMP (TC-AMP) as the acyladenylate intermediate, with the release of diphosphate. In Shigella dysenteriae serotype 1 (strain Sd197), this protein is Threonylcarbamoyl-AMP synthase.